Reading from the N-terminus, the 699-residue chain is Elongation factor G (699 aa).

The tr-type G domain occupies 8-288 (EDYRNFGIMA…AVVDYLPSPI (281 aa)). GTP is bound by residues 17–24 (AHIDAGKT), 86–90 (DTPGH), and 140–143 (NKMD).

Belongs to the TRAFAC class translation factor GTPase superfamily. Classic translation factor GTPase family. EF-G/EF-2 subfamily.

Its subcellular location is the cytoplasm. Catalyzes the GTP-dependent ribosomal translocation step during translation elongation. During this step, the ribosome changes from the pre-translocational (PRE) to the post-translocational (POST) state as the newly formed A-site-bound peptidyl-tRNA and P-site-bound deacylated tRNA move to the P and E sites, respectively. Catalyzes the coordinated movement of the two tRNA molecules, the mRNA and conformational changes in the ribosome. In Rhizobium meliloti (strain 1021) (Ensifer meliloti), this protein is Elongation factor G.